A 574-amino-acid polypeptide reads, in one-letter code: Ribonuclease Y (574 aa).

Residues 1-21 (MSLLDLVLLLLVLGLGGVLLL) traverse the membrane as a helical segment. The KH domain occupies 264–327 (AVTVVPIPSD…EIARMALEEL (64 aa)). An HD domain is found at 390-483 (VLKHSIQVAH…VAAADALSAA (94 aa)).

Belongs to the RNase Y family.

It is found in the cell membrane. Functionally, endoribonuclease that initiates mRNA decay. The protein is Ribonuclease Y of Thermus thermophilus (strain ATCC BAA-163 / DSM 7039 / HB27).